The chain runs to 757 residues: Neutral ceramidase 2 (757 aa).

A signal peptide spans 1-25; that stretch reads MAVSLPLFQFILFLLLLLLSRTVYA. Asn-311 is a glycosylation site (N-linked (GlcNAc...) asparagine). Ser-330 functions as the Nucleophile in the catalytic mechanism. N-linked (GlcNAc...) asparagine glycosylation is found at Asn-348 and Asn-657.

Belongs to the neutral ceramidase family.

The protein localises to the secreted. It is found in the endoplasmic reticulum. Its subcellular location is the golgi apparatus. The enzyme catalyses an N-acylsphing-4-enine + H2O = sphing-4-enine + a fatty acid. Functionally, hydrolyzes the sphingolipid ceramide into sphingosine and free fatty acid. This Arabidopsis thaliana (Mouse-ear cress) protein is Neutral ceramidase 2.